We begin with the raw amino-acid sequence, 343 residues long: tRNA N6-adenosine threonylcarbamoyltransferase (343 aa).

Fe cation is bound by residues His111 and His115. Residues 134–138 (LVSGG), Asp167, Gly180, and Asn276 contribute to the substrate site. Asp304 lines the Fe cation pocket.

It belongs to the KAE1 / TsaD family. It depends on Fe(2+) as a cofactor.

Its subcellular location is the cytoplasm. It carries out the reaction L-threonylcarbamoyladenylate + adenosine(37) in tRNA = N(6)-L-threonylcarbamoyladenosine(37) in tRNA + AMP + H(+). In terms of biological role, required for the formation of a threonylcarbamoyl group on adenosine at position 37 (t(6)A37) in tRNAs that read codons beginning with adenine. Is involved in the transfer of the threonylcarbamoyl moiety of threonylcarbamoyl-AMP (TC-AMP) to the N6 group of A37, together with TsaE and TsaB. TsaD likely plays a direct catalytic role in this reaction. The protein is tRNA N6-adenosine threonylcarbamoyltransferase of Hahella chejuensis (strain KCTC 2396).